We begin with the raw amino-acid sequence, 415 residues long: Serine/threonine transporter SstT (415 aa).

The next 8 helical transmembrane spans lie at 15–35, 45–65, 85–105, 142–162, 193–213, 217–237, 301–321, and 331–351; these read GSLVKQILVGLIAGILLAWLA, LGTLFVGALKAVAPVLVWILV, ILYILGTFFAALVAVAGSFIF, ALLNGNYIGILAWAIGLGIAL, VGIFGLVSATIAETGFNALLG, LLVVLLSCMLVMALVVNPLIV, GAAVTIPVLTLAAVNTLGIPV, and VVSAICACGASGVAGGSLLLI.

This sequence belongs to the dicarboxylate/amino acid:cation symporter (DAACS) (TC 2.A.23) family.

It is found in the cell inner membrane. It carries out the reaction L-serine(in) + Na(+)(in) = L-serine(out) + Na(+)(out). It catalyses the reaction L-threonine(in) + Na(+)(in) = L-threonine(out) + Na(+)(out). Functionally, involved in the import of serine and threonine into the cell, with the concomitant import of sodium (symport system). This is Serine/threonine transporter SstT from Photorhabdus laumondii subsp. laumondii (strain DSM 15139 / CIP 105565 / TT01) (Photorhabdus luminescens subsp. laumondii).